We begin with the raw amino-acid sequence, 334 residues long: MRFEEFKYVRKGVIVGLLIMLLYIIWPFIDVLAYSCAFAYMALPVYNILRKKFNKTISAGLAISIYILPIMTITIYALLTFMEIILSFNTKSIEPYINEILSIYNSFMLERIINNEQIIAKYIDEFIKYLVSQFSGKIIDVGYLIVKVIMVLFLTFYFLRDGDKAKNLIISFVPDEYKEKMRIYLSYLHDSYKNLFISCVSLSIIITILSYIGYLILGVPYAELFAIITGIFALLPILGGWMVYISIAIYFFLIHDYTKAVFMFIYGELFLSIAPDFVIRPYLVKKEVDIHPVLVVIAFLMAPLSLGLSGFAIGPLVVGALNAFYLAKYRDKKI.

Transmembrane regions (helical) follow at residues 13-33, 61-81, 138-158, 191-211, 234-254, 259-279, and 293-313; these read VIVGLLIMLLYIIWPFIDVLA, LAISIYILPIMTITIYALLTF, IIDVGYLIVKVIMVLFLTFYF, SYKNLFISCVSLSIIITILSY, LLPILGGWMVYISIAIYFFLI, KAVFMFIYGELFLSIAPDFVI, and VLVVIAFLMAPLSLGLSGFAI.

Belongs to the autoinducer-2 exporter (AI-2E) (TC 2.A.86) family.

The protein localises to the cell membrane. The protein is Putative transport protein MJ1177 of Methanocaldococcus jannaschii (strain ATCC 43067 / DSM 2661 / JAL-1 / JCM 10045 / NBRC 100440) (Methanococcus jannaschii).